Reading from the N-terminus, the 226-residue chain is uncharacterized protein (226 aa).

An HTH arsR-type domain is found at 1–92 (MNPNIAKISS…QLLHIAPKAK (92 aa)). A DNA-binding region (H-T-H motif) is located at residues 32-55 (AGELAYLANIKPQTASFHLNKLLE).

This is an uncharacterized protein from Bacillus subtilis (strain 168).